The primary structure comprises 521 residues: Glutamate--cysteine ligase (521 aa).

Belongs to the glutamate--cysteine ligase type 1 family. Type 1 subfamily.

It catalyses the reaction L-cysteine + L-glutamate + ATP = gamma-L-glutamyl-L-cysteine + ADP + phosphate + H(+). It functions in the pathway sulfur metabolism; glutathione biosynthesis; glutathione from L-cysteine and L-glutamate: step 1/2. The sequence is that of Glutamate--cysteine ligase from Aliivibrio salmonicida (strain LFI1238) (Vibrio salmonicida (strain LFI1238)).